We begin with the raw amino-acid sequence, 264 residues long: JmjC domain-containing protein 8 (264 aa).

The N-terminal stretch at 1-23 (MAPASRLLALWALAAVALPGSGA) is a signal peptide. Residues asparagine 130, asparagine 140, and asparagine 209 are each glycosylated (N-linked (GlcNAc...) asparagine). A JmjC domain is found at 131–264 (DTLYFFGDNN…TSVFISTFLG (134 aa)).

In terms of assembly, oligomer. Dimer. Interacts with PKM; regulates angiogenesis and metabolism. Post-translationally, N-glycosylated.

It localises to the endoplasmic reticulum lumen. It is found in the cytoplasm. Functionally, functions as a positive regulator of TNF-induced NF-kappa-B signaling. Regulates angiogenesis and cellular metabolism through interaction with PKM. The chain is JmjC domain-containing protein 8 from Homo sapiens (Human).